The primary structure comprises 491 residues: Glutamate--tRNA ligase (491 aa).

Positions Pro-14–Leu-24 match the 'HIGH' region motif. Cys-111, Cys-113, Cys-136, and Asp-138 together coordinate Zn(2+). The short motif at Lys-257 to Arg-261 is the 'KMSKS' region element. ATP is bound at residue Lys-260.

Belongs to the class-I aminoacyl-tRNA synthetase family. Glutamate--tRNA ligase type 1 subfamily. Monomer. It depends on Zn(2+) as a cofactor.

The protein resides in the cytoplasm. The enzyme catalyses tRNA(Glu) + L-glutamate + ATP = L-glutamyl-tRNA(Glu) + AMP + diphosphate. In terms of biological role, catalyzes the attachment of glutamate to tRNA(Glu) in a two-step reaction: glutamate is first activated by ATP to form Glu-AMP and then transferred to the acceptor end of tRNA(Glu). The protein is Glutamate--tRNA ligase of Nocardioides sp. (strain ATCC BAA-499 / JS614).